A 62-amino-acid chain; its full sequence is Conotoxin Qc5.1 (62 aa).

The signal sequence occupies residues 1–22; it reads MRCVPVFIILLLLSPSAPSVDA. Positions 23-48 are excised as a propeptide; that stretch reads HPMTKDDVPQASFHDDAKRTLQVPWM. Position 60 is a valine amide (V60).

Belongs to the conotoxin T superfamily. Contains 2 disulfide bonds that can be either 'C1-C3, C2-C4' or 'C1-C4, C2-C3', since these disulfide connectivities have been observed for conotoxins with cysteine framework V (for examples, see AC P0DQQ7 and AC P81755). Expressed by the venom duct.

It localises to the secreted. The protein is Conotoxin Qc5.1 of Conus quercinus (Oak cone).